The chain runs to 305 residues: UDP-3-O-acyl-N-acetylglucosamine deacetylase (305 aa).

Positions 79, 238, and 242 each coordinate Zn(2+). Histidine 265 (proton donor) is an active-site residue.

Belongs to the LpxC family. Zn(2+) serves as cofactor.

It carries out the reaction a UDP-3-O-[(3R)-3-hydroxyacyl]-N-acetyl-alpha-D-glucosamine + H2O = a UDP-3-O-[(3R)-3-hydroxyacyl]-alpha-D-glucosamine + acetate. It functions in the pathway glycolipid biosynthesis; lipid IV(A) biosynthesis; lipid IV(A) from (3R)-3-hydroxytetradecanoyl-[acyl-carrier-protein] and UDP-N-acetyl-alpha-D-glucosamine: step 2/6. Catalyzes the hydrolysis of UDP-3-O-myristoyl-N-acetylglucosamine to form UDP-3-O-myristoylglucosamine and acetate, the committed step in lipid A biosynthesis. The polypeptide is UDP-3-O-acyl-N-acetylglucosamine deacetylase (Vibrio atlanticus (strain LGP32) (Vibrio splendidus (strain Mel32))).